A 182-amino-acid chain; its full sequence is Ribosome-recycling factor (182 aa).

Belongs to the RRF family.

Its subcellular location is the cytoplasm. Its function is as follows. Responsible for the release of ribosomes from messenger RNA at the termination of protein biosynthesis. May increase the efficiency of translation by recycling ribosomes from one round of translation to another. The polypeptide is Ribosome-recycling factor (Parasynechococcus marenigrum (strain WH8102)).